The primary structure comprises 384 residues: Carbamoyl phosphate synthase small chain (384 aa).

The segment at M1–V192 is CPSase. S51, G244, and G246 together coordinate L-glutamine. The region spanning K196–K382 is the Glutamine amidotransferase type-1 domain. The active-site Nucleophile is C272. Residues M273, Q276, N312, G314, and F315 each coordinate L-glutamine. Residues H355 and E357 contribute to the active site.

Belongs to the CarA family. In terms of assembly, composed of two chains; the small (or glutamine) chain promotes the hydrolysis of glutamine to ammonia, which is used by the large (or ammonia) chain to synthesize carbamoyl phosphate. Tetramer of heterodimers (alpha,beta)4.

It localises to the plastid. The protein resides in the chloroplast. The catalysed reaction is hydrogencarbonate + L-glutamine + 2 ATP + H2O = carbamoyl phosphate + L-glutamate + 2 ADP + phosphate + 2 H(+). It catalyses the reaction L-glutamine + H2O = L-glutamate + NH4(+). Its pathway is amino-acid biosynthesis; L-arginine biosynthesis; carbamoyl phosphate from bicarbonate: step 1/1. The protein operates within pyrimidine metabolism; UMP biosynthesis via de novo pathway; (S)-dihydroorotate from bicarbonate: step 1/3. Functionally, small subunit of the glutamine-dependent carbamoyl phosphate synthetase (CPSase). CPSase catalyzes the formation of carbamoyl phosphate from the ammonia moiety of glutamine, carbonate, and phosphate donated by ATP, constituting the first step of 2 biosynthetic pathways, one leading to arginine and/or urea and the other to pyrimidine nucleotides. The small subunit (glutamine amidotransferase) binds and cleaves glutamine to supply the large subunit with the substrate ammonia. This Pyropia yezoensis (Susabi-nori) protein is Carbamoyl phosphate synthase small chain.